The sequence spans 315 residues: Transaldolase (315 aa).

K131 acts as the Schiff-base intermediate with substrate in catalysis.

It belongs to the transaldolase family. Type 1 subfamily. As to quaternary structure, homodimer.

The protein localises to the cytoplasm. It catalyses the reaction D-sedoheptulose 7-phosphate + D-glyceraldehyde 3-phosphate = D-erythrose 4-phosphate + beta-D-fructose 6-phosphate. It functions in the pathway carbohydrate degradation; pentose phosphate pathway; D-glyceraldehyde 3-phosphate and beta-D-fructose 6-phosphate from D-ribose 5-phosphate and D-xylulose 5-phosphate (non-oxidative stage): step 2/3. In terms of biological role, transaldolase is important for the balance of metabolites in the pentose-phosphate pathway. The protein is Transaldolase of Actinobacillus pleuropneumoniae serotype 7 (strain AP76).